The chain runs to 289 residues: Poly-beta-1,6-N-acetyl-D-glucosamine N-deacetylase (289 aa).

Residues 1-30 (MKPFKLIFISALMILIMTNATPISHLNAQA) form the signal peptide. The region spanning 113-289 (RSVWINFDDM…KEWDGFDEEK (177 aa)) is the NodB homology domain.

Belongs to the polysaccharide deacetylase family.

Its subcellular location is the secreted. The protein resides in the cell wall. Its function is as follows. Catalyzes the N-deacetylation of poly-beta-1,6-N-acetyl-D-glucosamine (PNAG, also referred to as PIA), a biofilm adhesin polysaccharide. In fact, the IcaB deacetylase converts 15 to 20% of the GlcNAc residues of PNAG to glucosamine. N-deacetylation is crucial for attachment of the polysaccharide to the bacterial cell surface; it leads to the introduction of positive charges in the otherwise neutral PIA polymer, allowing electrostatic interactions. Deacetylation of the polymer is also essential for key virulence mechanisms of S.epidermidis, namely biofilm formation, colonization, and resistance to neutrophil phagocytosis and human antibacterial peptides. This is Poly-beta-1,6-N-acetyl-D-glucosamine N-deacetylase (icaB) from Staphylococcus epidermidis (strain ATCC 35984 / DSM 28319 / BCRC 17069 / CCUG 31568 / BM 3577 / RP62A).